The following is a 274-amino-acid chain: Triosephosphate isomerase (274 aa).

31–33 (NWK) provides a ligand contact to substrate. Histidine 118 functions as the Electrophile in the catalytic mechanism. Catalysis depends on glutamate 188, which acts as the Proton acceptor. Substrate contacts are provided by residues glycine 194, serine 234, and 255–256 (GG).

It belongs to the triosephosphate isomerase family. As to quaternary structure, homodimer.

Its subcellular location is the cytoplasm. It carries out the reaction D-glyceraldehyde 3-phosphate = dihydroxyacetone phosphate. It participates in carbohydrate biosynthesis; gluconeogenesis. Its pathway is carbohydrate degradation; glycolysis; D-glyceraldehyde 3-phosphate from glycerone phosphate: step 1/1. Involved in the gluconeogenesis. Catalyzes stereospecifically the conversion of dihydroxyacetone phosphate (DHAP) to D-glyceraldehyde-3-phosphate (G3P). This is Triosephosphate isomerase from Chlamydia trachomatis serovar A (strain ATCC VR-571B / DSM 19440 / HAR-13).